Here is a 375-residue protein sequence, read N- to C-terminus: Saccharopine dehydrogenase [NAD(+), L-lysine-forming] (375 aa).

L-saccharopine is bound by residues R18 and K78. K78 acts as the Proton acceptor in catalysis. H96 serves as the catalytic Proton donor. Q101 serves as a coordination point for L-saccharopine. Residue R130 participates in NAD(+) binding. L-saccharopine contacts are provided by R131 and F135. NAD(+) contacts are provided by residues 203-204, D227, T231, Y252, and V279; that span reads GR. C205 and C250 are oxidised to a cystine. Position 280-282 (280-282) interacts with L-saccharopine; the sequence is SAD. An NAD(+)-binding site is contributed by 322–325; the sequence is IDHL.

The protein belongs to the AlaDH/PNT family. Monomer.

It carries out the reaction L-saccharopine + NAD(+) + H2O = L-lysine + 2-oxoglutarate + NADH + H(+). It functions in the pathway amino-acid biosynthesis; L-lysine biosynthesis via AAA pathway; L-lysine from L-alpha-aminoadipate (fungal route): step 3/3. Functionally, catalyzes the NAD(+)-dependent cleavage of saccharopine to L-lysine and 2-oxoglutarate, the final step in the alpha-aminoadipate (AAA) pathway for lysin biosynthesis. This is Saccharopine dehydrogenase [NAD(+), L-lysine-forming] from Emericella nidulans (strain FGSC A4 / ATCC 38163 / CBS 112.46 / NRRL 194 / M139) (Aspergillus nidulans).